The sequence spans 292 residues: Elongation factor Ts (292 aa).

Residues 81–84 (TDFV) form an involved in Mg(2+) ion dislocation from EF-Tu region.

It belongs to the EF-Ts family.

The protein resides in the cytoplasm. Its function is as follows. Associates with the EF-Tu.GDP complex and induces the exchange of GDP to GTP. It remains bound to the aminoacyl-tRNA.EF-Tu.GTP complex up to the GTP hydrolysis stage on the ribosome. This is Elongation factor Ts from Acidithiobacillus ferrooxidans (strain ATCC 23270 / DSM 14882 / CIP 104768 / NCIMB 8455) (Ferrobacillus ferrooxidans (strain ATCC 23270)).